The primary structure comprises 418 residues: MHIFDELKERGLIFQTTDEEALRKALEEGQVSYYTGYDPTADSLHLGHLVAILTSRRLQLAGHKPYALVGGATGLIGDPSFKDAERSLQTKDTVDGWVKSIQGQLSRFLDFENGENKAVMVNNYDWFGSISFIDFLRDIGKYFTVNYMMSKESVKKRIETGISYTEFAYQIMQGYDFFVLNQDHNVTLQIGGSDQWGNMTAGTELLRRKADKTGHVITVPLITDATGKKFGKSEGNAVWLNPEKTSPYEMYQFWMNVMDADAVRFLKIFTFLSLDEIEDIRKQFEAAPHERLAQKVLAREVVTLVHGEEAYKEALNITEQLFAGNIKNLSVKELKQGLRGVPNYQVQADENNNIVELLVSSGIVNSKRQAREDVQNGAIYVNGDRIQELDYVLSDADKLENELTVIRRGKKKYFVLTY.

L-tyrosine is bound at residue tyrosine 34. The 'HIGH' region signature appears at 39 to 48 (PTADSLHLGH). L-tyrosine contacts are provided by tyrosine 169 and glutamine 173. Positions 229 to 233 (KFGKS) match the 'KMSKS' region motif. Position 232 (lysine 232) interacts with ATP. Residues 352–418 (NNIVELLVSS…GKKKYFVLTY (67 aa)) enclose the S4 RNA-binding domain.

It belongs to the class-I aminoacyl-tRNA synthetase family. TyrS type 1 subfamily. Homodimer.

The protein localises to the cytoplasm. It catalyses the reaction tRNA(Tyr) + L-tyrosine + ATP = L-tyrosyl-tRNA(Tyr) + AMP + diphosphate + H(+). Catalyzes the attachment of tyrosine to tRNA(Tyr) in a two-step reaction: tyrosine is first activated by ATP to form Tyr-AMP and then transferred to the acceptor end of tRNA(Tyr). This chain is Tyrosine--tRNA ligase, found in Streptococcus pneumoniae (strain ATCC BAA-255 / R6).